The sequence spans 620 residues: 1-deoxy-D-xylulose-5-phosphate synthase (620 aa).

Thiamine diphosphate contacts are provided by residues H80 and 121-123 (GHS). D152 is a binding site for Mg(2+). Residues 153–154 (GA), N181, Y288, and E370 each bind thiamine diphosphate. N181 is a Mg(2+) binding site.

This sequence belongs to the transketolase family. DXPS subfamily. As to quaternary structure, homodimer. Mg(2+) serves as cofactor. The cofactor is thiamine diphosphate.

The enzyme catalyses D-glyceraldehyde 3-phosphate + pyruvate + H(+) = 1-deoxy-D-xylulose 5-phosphate + CO2. Its pathway is metabolic intermediate biosynthesis; 1-deoxy-D-xylulose 5-phosphate biosynthesis; 1-deoxy-D-xylulose 5-phosphate from D-glyceraldehyde 3-phosphate and pyruvate: step 1/1. In terms of biological role, catalyzes the acyloin condensation reaction between C atoms 2 and 3 of pyruvate and glyceraldehyde 3-phosphate to yield 1-deoxy-D-xylulose-5-phosphate (DXP). The polypeptide is 1-deoxy-D-xylulose-5-phosphate synthase (Salmonella arizonae (strain ATCC BAA-731 / CDC346-86 / RSK2980)).